The primary structure comprises 701 residues: DNA ligase (701 aa).

NAD(+)-binding positions include 58 to 62 (DYEYD), 107 to 108 (SL), and glutamate 138. Lysine 140 functions as the N6-AMP-lysine intermediate in the catalytic mechanism. Arginine 161, glutamate 199, lysine 323, and lysine 347 together coordinate NAD(+). Cysteine 441, cysteine 444, cysteine 459, and cysteine 464 together coordinate Zn(2+). The BRCT domain maps to 621–701 (EKRGKLAGLN…EEFLKMIGQQ (81 aa)).

The protein belongs to the NAD-dependent DNA ligase family. LigA subfamily. Requires Mg(2+) as cofactor. It depends on Mn(2+) as a cofactor.

The enzyme catalyses NAD(+) + (deoxyribonucleotide)n-3'-hydroxyl + 5'-phospho-(deoxyribonucleotide)m = (deoxyribonucleotide)n+m + AMP + beta-nicotinamide D-nucleotide.. In terms of biological role, DNA ligase that catalyzes the formation of phosphodiester linkages between 5'-phosphoryl and 3'-hydroxyl groups in double-stranded DNA using NAD as a coenzyme and as the energy source for the reaction. It is essential for DNA replication and repair of damaged DNA. The protein is DNA ligase of Sulfurihydrogenibium azorense (strain DSM 15241 / OCM 825 / Az-Fu1).